We begin with the raw amino-acid sequence, 193 residues long: LOB domain-containing protein 12 (193 aa).

One can recognise an LOB domain in the interval 7 to 108 (SPCASCKLLR…MQLAVAQAEI (102 aa)).

Belongs to the LOB domain-containing protein family. As to expression, expressed predominantly in roots, and at low levels in shoots, floral stems and open flowers.

The protein is LOB domain-containing protein 12 (LBD12) of Arabidopsis thaliana (Mouse-ear cress).